A 274-amino-acid polypeptide reads, in one-letter code: Formamidopyrimidine-DNA glycosylase (274 aa).

The active-site Schiff-base intermediate with DNA is P2. The Proton donor role is filled by E3. The active-site Proton donor; for beta-elimination activity is K58. DNA-binding residues include H91, R110, and K152. The FPG-type zinc finger occupies 237–271; that stretch reads KVYGRKNLPCLVCENKIETVVIAGRHSAFCPHCQP. The active-site Proton donor; for delta-elimination activity is R261.

Belongs to the FPG family. As to quaternary structure, monomer. Zn(2+) is required as a cofactor.

The catalysed reaction is Hydrolysis of DNA containing ring-opened 7-methylguanine residues, releasing 2,6-diamino-4-hydroxy-5-(N-methyl)formamidopyrimidine.. It catalyses the reaction 2'-deoxyribonucleotide-(2'-deoxyribose 5'-phosphate)-2'-deoxyribonucleotide-DNA = a 3'-end 2'-deoxyribonucleotide-(2,3-dehydro-2,3-deoxyribose 5'-phosphate)-DNA + a 5'-end 5'-phospho-2'-deoxyribonucleoside-DNA + H(+). Functionally, involved in base excision repair of DNA damaged by oxidation or by mutagenic agents. Acts as a DNA glycosylase that recognizes and removes damaged bases. Has a preference for oxidized purines, such as 7,8-dihydro-8-oxoguanine (8-oxoG). Has AP (apurinic/apyrimidinic) lyase activity and introduces nicks in the DNA strand. Cleaves the DNA backbone by beta-delta elimination to generate a single-strand break at the site of the removed base with both 3'- and 5'-phosphates. In Legionella pneumophila subsp. pneumophila (strain Philadelphia 1 / ATCC 33152 / DSM 7513), this protein is Formamidopyrimidine-DNA glycosylase.